A 93-amino-acid polypeptide reads, in one-letter code: Alpha-defensin 26 (93 aa).

Residues 1–19 form the signal peptide; that stretch reads MKTLVLLSALFLLAFQVQA. Positions 20-58 are excised as a propeptide; the sequence is DPIQNTDEETNTEVQPQEEDQAVSVSFGNPEGSDLQEES. The segment at 24 to 55 is disordered; sequence NTDEETNTEVQPQEEDQAVSVSFGNPEGSDLQ. Residues 25–40 are compositionally biased toward acidic residues; the sequence is TDEETNTEVQPQEEDQ. 3 disulfide bridges follow: cysteine 64/cysteine 92, cysteine 66/cysteine 81, and cysteine 71/cysteine 91.

This sequence belongs to the alpha-defensin family.

Its subcellular location is the secreted. May have microbicidal activities. The sequence is that of Alpha-defensin 26 (Defa26) from Mus musculus (Mouse).